The primary structure comprises 160 residues: Nucleotide-binding protein VFMJ11_1323 (160 aa).

The protein belongs to the YajQ family.

Nucleotide-binding protein. The polypeptide is Nucleotide-binding protein VFMJ11_1323 (Aliivibrio fischeri (strain MJ11) (Vibrio fischeri)).